The sequence spans 231 residues: L-ribulose-5-phosphate 4-epimerase (231 aa).

Substrate is bound by residues Gly-27–Asn-28, Ser-44–Gly-45, and Ser-74–Ser-75. Positions 76, 95, and 97 each coordinate Zn(2+). Catalysis depends on Asp-120, which acts as the Proton donor/acceptor. Zn(2+) is bound at residue His-171. Tyr-229 functions as the Proton donor/acceptor in the catalytic mechanism.

Belongs to the aldolase class II family. AraD/FucA subfamily. In terms of assembly, homotetramer. Zn(2+) serves as cofactor.

It carries out the reaction L-ribulose 5-phosphate = D-xylulose 5-phosphate. It functions in the pathway carbohydrate degradation; L-arabinose degradation via L-ribulose; D-xylulose 5-phosphate from L-arabinose (bacterial route): step 3/3. Its function is as follows. Involved in the degradation of L-arabinose. Catalyzes the interconversion of L-ribulose 5-phosphate (LRu5P) and D-xylulose 5-phosphate (D-Xu5P) via a retroaldol/aldol mechanism (carbon-carbon bond cleavage analogous to a class II aldolase reaction). This Salmonella typhimurium (strain LT2 / SGSC1412 / ATCC 700720) protein is L-ribulose-5-phosphate 4-epimerase.